A 365-amino-acid chain; its full sequence is UDP-N-acetylglucosamine--N-acetylmuramyl-(pentapeptide) pyrophosphoryl-undecaprenol N-acetylglucosamine transferase (365 aa).

Residues 17–19 (TGG), asparagine 129, arginine 167, serine 194, isoleucine 250, 269–274 (ALTVSE), and glutamine 295 each bind UDP-N-acetyl-alpha-D-glucosamine.

Belongs to the glycosyltransferase 28 family. MurG subfamily.

Its subcellular location is the cell inner membrane. The enzyme catalyses di-trans,octa-cis-undecaprenyl diphospho-N-acetyl-alpha-D-muramoyl-L-alanyl-D-glutamyl-meso-2,6-diaminopimeloyl-D-alanyl-D-alanine + UDP-N-acetyl-alpha-D-glucosamine = di-trans,octa-cis-undecaprenyl diphospho-[N-acetyl-alpha-D-glucosaminyl-(1-&gt;4)]-N-acetyl-alpha-D-muramoyl-L-alanyl-D-glutamyl-meso-2,6-diaminopimeloyl-D-alanyl-D-alanine + UDP + H(+). The protein operates within cell wall biogenesis; peptidoglycan biosynthesis. Cell wall formation. Catalyzes the transfer of a GlcNAc subunit on undecaprenyl-pyrophosphoryl-MurNAc-pentapeptide (lipid intermediate I) to form undecaprenyl-pyrophosphoryl-MurNAc-(pentapeptide)GlcNAc (lipid intermediate II). The sequence is that of UDP-N-acetylglucosamine--N-acetylmuramyl-(pentapeptide) pyrophosphoryl-undecaprenol N-acetylglucosamine transferase from Shewanella violacea (strain JCM 10179 / CIP 106290 / LMG 19151 / DSS12).